The following is a 152-amino-acid chain: Transcriptional regulator MraZ (152 aa).

SpoVT-AbrB domains follow at residues 7–54 (INSI…TMDE) and 83–126 (ASEM…SQEA).

This sequence belongs to the MraZ family. In terms of assembly, forms oligomers.

Its subcellular location is the cytoplasm. The protein resides in the nucleoid. The protein is Transcriptional regulator MraZ of Hydrogenovibrio crunogenus (strain DSM 25203 / XCL-2) (Thiomicrospira crunogena).